The sequence spans 277 residues: Reaction center protein L chain (277 aa).

3 helical membrane-spanning segments follow: residues 30–52 (FYVGIFGVMTVFFALIGIALIAW), 84–106 (GGIWQWVSICATGAFVTWALREV), and 113–135 (GIGFHVPFAFSFAIFAYVTLVVI). (7R,8Z)-bacteriochlorophyll b-binding residues include His-154 and His-174. Residues 173 to 195 (AHMIAITFFFTTCLALALHGGLV) form a helical membrane-spanning segment. His-191 serves as a coordination point for Fe cation. Phe-217 is an a ubiquinone binding site. His-231 is a binding site for Fe cation. Residues 233–255 (LGLFLALSAVFFSAVCMIISGPV) traverse the membrane as a helical segment.

The protein belongs to the reaction center PufL/M/PsbA/D family. Reaction center is composed of four bacteriochlorophylls, two bacteriopheophytins, two ubiquinones, one iron, and three highly hydrophobic polypeptide chains (designated L, M, and H).

Its subcellular location is the cellular chromatophore membrane. Functionally, the reaction center is a membrane-bound complex that mediates the initial photochemical event in the electron transfer process of photosynthesis. The polypeptide is Reaction center protein L chain (pufL) (Rhodopseudomonas palustris (strain ATCC BAA-98 / CGA009)).